We begin with the raw amino-acid sequence, 405 residues long: Deoxyguanosinetriphosphate triphosphohydrolase-like protein (405 aa).

An HD domain is found at 75–219 (RLTHTIEVAQ…AAVADDIAYN (145 aa)).

Belongs to the dGTPase family. Type 2 subfamily.

The protein is Deoxyguanosinetriphosphate triphosphohydrolase-like protein of Allorhizobium ampelinum (strain ATCC BAA-846 / DSM 112012 / S4) (Agrobacterium vitis (strain S4)).